Consider the following 3037-residue polypeptide: MSTNPKPQRKTKRNTNRRPQDVKFPGGGQIVGGVYLLPRRGPRLGVRAARKTSERSQPRGRRQPIPKDRRSTGKSWGRPGYPWPLYRNEGLGWAGWLLSPRGSRPSWGPSDPRHKSRNLGKVIDTLTCGFADLMGYIPVVGAPVGGVARALAHGVRVLEDGINYATGNLPGCSFSIFLLALLSCISVPVSAVEVRNTSSSYMATNDCSNSSIVWQLEGAVLHTPGCVPCEKTGNKSRCWVPVTPNIAINQPGALTKGLRAHIDVIVMSATLCSALYVGDVCGALMIAAQVVVVSPQHHHFVQECNCSIYPGKITGHRMAWDMMMNWSPTTTMLLAYLVRIPEVVLDIITGGHWGVMFGLAYFSMQGAWAKVVVILLLTAGVEASTYTTGAVVGRSTHLFTSMFSLGSQQRVQLIHTNGSWHINRTALNCNDSLETGFLAALFYTSSFNSSGCPERLAACRSIESFRIGWGSLEYEESVTNDADMRPYCWHYPPRPCGIVPARTVCGPVYCFTPSPVVVGTTDRAGAPTYNWGENETDVFLLNSTRPPKGAWFGCTWMNGTGFTKTCGAPPCRIRKDFNASEDLLCPTDCFRKHPGATYIKCGAGPWLTPRCLVDYPYRLWHYPCTVNYTIYKVRMFVGGIEHRLQAACNFTRGDRCNLEDRDRSQLSPLLHSTTEWAILPCSYTDLPALSTGLLHLHQNIVDVQYLYGLSPAITKYVVKWEWVVLLFLLLADARVCACLWMLLLLGQAEAALEKLVILHAASAASSNGLLYFILFFVAAWCIKGRAVPMVTYTLLGCWSFVLLLMALPHQAYALDAAEQGQIGMALLIAITAFTITPAYKILLSRCLWWTCYMLVLAEALIQDWIPPLQARGGRDGVIWAMTMFYPGVVFDITKWLLAILGPGYLFRAAVMRTPYFVRANALLRMCALVKQLAGGKYVQVALITLGKWTGTYIYDHLSPMSDWAADGLRDLAVAVEPIVFSPMERKVIVWGAETTACGDIIHGLPVSARLGQEVLLGPADGYTSKGWRLLAPITAYAQQTRGLLSAIVVSMTGRDKTDQAGEIQVLSTVTQSFLGTSISGVLWTVFHGAGNKTLAGSRGPVTQMYSSAEGDLVGWPSPPGTRSLEPCTCGAVDLYLVTRNADVIPARRRGDRRGALLSPRPLSSLKGSSGGPVLCPRGHAVGIFRAAVCSRGVAKSIDFIPVESLDVVTRSPNFTDNSTPPAVPQTYQVGYLHAPTGSGKSTKVPAAYAAQGYKVLVLNPSVAATLGFGAYMSKAYGINPNIRTGVRTVTTGDAITYSTYGKFLADGGCSGGAYDVIICDECHSVDSTTILGIGTVLDQAETAGVRLTVLATATPPGSVTTPHPNIEEVALGHEGEIPFYGKAIPLSAIKGGRHLIFCHSKKKCDELAVALRGMGLNAVAYYRGLDVSIIPTQGDVVVVATDALMTGYTGDFDSVIDCNVAVTQVVDFSLDPTFTITTQTVPQDSVSRSQRRGRTGRGRLGIYRYVSSGERASGMFDTVVLCECYDAGAAWYELTPAETTVRLRAYFNTPGLPVCQDHLEFWEAVFTGLTHIDAHFLSQTKQAGEGFPYLVAYQATVCARAKAPPPSWDVMWKCLIRLKPTLVGPTPLLYRLGSVTNEVTLTHPVTKYIATCMQADLEIMTSTWVLAGGVLAAVAAYCLATGCVSIIGRIHVNQKTIIAPDKEVLYEAFDEMEECASRTALIEEGHRIAEMLKSKIQGLMQQASKQAQGVQPAVQATWPKLEQFWAKHMWNFISGIQYLAGLSTLPGNPAVASMMSFSAALTSPLSTSTTILLNIMGGWLASQIAPPAGATGFVVSGLVGAAVGSIGLGKILVDVLAGYGAGISGALVAFKIMSGEKPSVEDVVNLLPAILSPGALVVGVICAAILRRHVGQGEGAVQWMNRLIAFASRGNHVAPTHYVAESDASQRVTQLLGSLTITSLLRRLHQWITEDCPVPCSGSWLRDVWDWVCSILIDFKNWLSAKLFPRLPGIPFISCQKGYRGTWAGTGIMTTRCPCGANITGNVRLGTMRISGPKTCLNTWQGTFPINCYTEGSCVPKPAPNFKTAIWRVAASEYAEVTQHDSHAYVTGLTADNLKVPCQLPCPEFFSWVDGVQIHRFAPTPKAFMRDEVSFSVGLNSYVVGSQLPCEPEPDTEVLASMLTDPSHITAEAAARRLARGSPPSAASSSASQLSAPSLRATCTTHAKCPDIDMVDANLFCWCTMGGNMTRIESESKVLMVDSFDPVVDKEDEREPSIPSEYLLPKSRFPPALPPWARPDYNPPLLETWKRPDYQPPVVAGCALPPPGTTPVPPPRRRRAVVLDQSNVGEALKELAIKSFGCPPPSGDPGHSTGGGTTGETSKSPPDEPDDSEAGSVSSMPPLEGEPGDPDLEPEQVEHPAPPQEGGAAPGSDSGSWSTCSDVDDSVVCCSMSYSWTGALITPCSPEEEKLPINPLSNSLLRYHNKVYCTTSRSASQRAKKVTFDRVQLLDSHYESVLKDVKQAATKVSAKLLSIEEACALTPPHSARSKYGFGAKEVRSLSRRAVDHIKSVWEDLLEDHCSPIDTTIMAKNEVFCVDPTKGGKKPARLIVYPDLGVRVCEKMALYDITQKLPVAVMGQSYGFQYSPAQRVDFLLQAWKEKKTPMGFSYDTRCFDSTVTERDIRTEESIYLSCSLPEEARTAIHSLTERLYVGGPMTNSKGQSCGYRRCRASGVLTTSMGNTLTCYVKAKAACNAAGIVAPTMLVCGDDLVVISESQGVEEDERNLRVFTEAMTRYSAPPGDPPKAEYDLELITSCSSNVSVALDPRGRRRYYLTRDPTTPLARAAWETARHSPVNSWLGNIIQYAPTVWVRMVLMTHFFSVLMAQDTLDQDLNFEMYGAVYSVSPLDLPAIIERLHGLEAFSLHSYSPHELTRVAAALRKLGAPPLRAWKSRARAVRASLISRGGSAATCGRYLFNWAVRTKLKLTPLPAARLLDLSSWFTVSAGGGDIYHSVSRARPRLLLLGLLLLCVGVGIFLLPAR.

Residue Ser2 is modified to N-acetylserine; by host. The segment at 2 to 23 is interaction with STAT1; that stretch reads STNPKPQRKTKRNTNRRPQDVK. The segment at 2–58 is interaction with EIF2AK2/PKR; the sequence is STNPKPQRKTKRNTNRRPQDVKFPGGGQIVGGVYLLPRRGPRLGVRAARKTSERSQP. The tract at residues 2-59 is interaction with DDX3X; sequence STNPKPQRKTKRNTNRRPQDVKFPGGGQIVGGVYLLPRRGPRLGVRAARKTSERSQPR. The disordered stretch occupies residues 2–75; sequence STNPKPQRKT…PKDRRSTGKS (74 aa). Residues 2-168 are Cytoplasmic-facing; that stretch reads STNPKPQRKT…EDGINYATGN (167 aa). 2 consecutive short sequence motifs (nuclear localization signal) follow at residues 5–13 and 38–43; these read PKPQRKTKR and PRRGPR. Positions 7–16 are enriched in basic residues; that stretch reads PQRKTKRNTN. The segment covering 32–47 has biased composition (low complexity); it reads GGVYLLPRRGPRLGVR. Position 53 is a phosphoserine; by host (Ser53). Short sequence motifs (nuclear localization signal) lie at residues 58–64 and 66–71; these read PRGRRQP and PKDRRS. A phosphoserine; by host mark is found at Ser99 and Ser116. Positions 112-152 are important for endoplasmic reticulum and mitochondrial localization; the sequence is PRHKSRNLGKVIDTLTCGFADLMGYIPVVGAPVGGVARALA. Residues 122–173 are interaction with APOA2; that stretch reads VIDTLTCGFADLMGYIPVVGAPVGGVARALAHGVRVLEDGINYATGNLPGCS. An important for lipid droplets localization region spans residues 164 to 167; that stretch reads YATG. The chain crosses the membrane as a helical span at residues 169–189; it reads LPGCSFSIFLLALLSCISVPV. A propeptide spans 178–191 (ER anchor for the core protein, removed in mature form by host signal peptidase); the sequence is LLALLSCISVPVSA. Residues 190 to 358 are Lumenal-facing; sequence SAVEVRNTSS…TGGHWGVMFG (169 aa). N-linked (GlcNAc...) asparagine; by host glycosylation is found at Asn196, Asn209, and Asn234. The interval 265 to 296 is important for fusion; sequence IVMSATLCSALYVGDVCGALMIAAQVVVVSPQ. The N-linked (GlcNAc...) asparagine; by host glycan is linked to Asn305. Residues 359–379 form a helical membrane-spanning segment; that stretch reads LAYFSMQGAWAKVVVILLLTA. Topologically, residues 380–729 are lumenal; the sequence is GVEASTYTTG…WEWVVLLFLL (350 aa). Positions 385 to 412 are HVR1; that stretch reads TYTTGAVVGRSTHLFTSMFSLGSQQRVQ. N-linked (GlcNAc...) (high mannose) asparagine; by host glycosylation is found at Asn417, Asn423, and Asn430. 4 disulfide bridges follow: Cys429/Cys554, Cys452/Cys459, Cys488/Cys496, and Cys505/Cys510. Asn448 is a glycosylation site (N-linked (GlcNAc...) asparagine; by host). Residues 475 to 480 are HVR2; that stretch reads EESVTN. Positions 482–495 are CD81-binding 1; the sequence is ADMRPYCWHYPPRP. Asn534 is a glycosylation site (N-linked (GlcNAc...) asparagine; by host). The interval 546–553 is CD81-binding 2; sequence PPKGAWFG. The N-linked (GlcNAc...) asparagine; by host glycan is linked to Asn558. Disulfide bonds link Cys566–Cys571, Cys585–Cys589, Cys601–Cys624, and Cys611–Cys648. Asn627 and Asn649 each carry an N-linked (GlcNAc...) (high mannose) asparagine; by host glycan. Cys656 and Cys681 form a disulfide bridge. The tract at residues 664 to 675 is PKR/eIF2-alpha phosphorylation homology domain (PePHD); the sequence is SQLSPLLHSTTE. A helical transmembrane segment spans residues 730–750; it reads LADARVCACLWMLLLLGQAEA. Over 751–761 the chain is Lumenal; that stretch reads ALEKLVILHAA. Residues 762 to 782 traverse the membrane as a helical segment; the sequence is SAASSNGLLYFILFFVAAWCI. The Cytoplasmic segment spans residues 783-786; the sequence is KGRA. Residues 787–807 traverse the membrane as a helical segment; it reads VPMVTYTLLGCWSFVLLLMAL. The Lumenal segment spans residues 808–817; it reads PHQAYALDAA. A helical membrane pass occupies residues 818 to 838; it reads EQGQIGMALLIAITAFTITPA. Topologically, residues 839–885 are cytoplasmic; the sequence is YKILLSRCLWWTCYMLVLAEALIQDWIPPLQARGGRDGVIWAMTMFY. The helical transmembrane segment at 886 to 906 threads the bilayer; the sequence is PGVVFDITKWLLAILGPGYLF. The Peptidase C18 domain occupies 905 to 1030; that stretch reads LFRAAVMRTP…GYTSKGWRLL (126 aa). At 907–932 the chain is on the lumenal side; that stretch reads RAAVMRTPYFVRANALLRMCALVKQL. A protease NS2-3 region spans residues 908–1210; sequence AAVMRTPYFV…PVESLDVVTR (303 aa). Cys926 is lipidated: S-palmitoyl cysteine; by host. Residues 933 to 953 form a helical membrane-spanning segment; it reads AGGKYVQVALITLGKWTGTYI. The segment at 933–953 is interaction with host SCPS1; that stretch reads AGGKYVQVALITLGKWTGTYI. Residues 954 to 1661 lie on the Cytoplasmic side of the membrane; it reads YDHLSPMSDW…CMQADLEIMT (708 aa). Catalysis depends on for protease NS2 activity; shared with dimeric partner residues His956, Glu976, and Cys997. Residues 1031 to 1212 enclose the Peptidase S29 domain; sequence APITAYAQQT…ESLDVVTRSP (182 aa). Active-site charge relay system; for serine protease NS3 activity residues include His1087 and Asp1111. Residues Cys1127 and Cys1129 each coordinate Zn(2+). Ser1169 acts as the Charge relay system; for serine protease NS3 activity in catalysis. The Zn(2+) site is built by Cys1175 and His1179. The Helicase ATP-binding domain occupies 1221 to 1373; that stretch reads PAVPQTYQVG…PNIEEVALGH (153 aa). Residue 1234–1241 coordinates ATP; the sequence is APTGSGKS. Ser1241 and Glu1321 together coordinate Mg(2+). The DECH box signature appears at 1320–1323; it reads DECH. Positions 1490-1502 are RNA-binding; the sequence is QRRGRTGRGRLGI. Residues 1662–1682 traverse the membrane as a helical segment; that stretch reads STWVLAGGVLAAVAAYCLATG. The tract at residues 1683-1694 is NS3-binding; it reads CVSIIGRIHVNQ. Residues 1683-1809 are Cytoplasmic-facing; the sequence is CVSIIGRIHV…ALTSPLSTST (127 aa). Residues 1810–1830 traverse the membrane as a helical segment; sequence TILLNIMGGWLASQIAPPAGA. Over 1831 to 1832 the chain is Lumenal; it reads TG. A helical membrane pass occupies residues 1833–1853; it reads FVVSGLVGAAVGSIGLGKILV. Asp1854 is a topological domain (cytoplasmic). Residues 1855–1875 form a helical membrane-spanning segment; that stretch reads VLAGYGAGISGALVAFKIMSG. Residues 1876–1885 lie on the Lumenal side of the membrane; sequence EKPSVEDVVN. The chain crosses the membrane as a helical span at residues 1886–1906; sequence LLPAILSPGALVVGVICAAIL. The Cytoplasmic portion of the chain corresponds to 1907–1976; it reads RRHVGQGEGA…WITEDCPVPC (70 aa). The S-palmitoyl cysteine; by host moiety is linked to residue Cys1976. An intramembrane segment occupies 1977–2006; the sequence is SGSWLRDVWDWVCSILIDFKNWLSAKLFPR. At 2007–3016 the chain is on the cytoplasmic side; the sequence is LPGIPFISCQ…YHSVSRARPR (1010 aa). Residues Cys2015, Cys2033, Cys2035, and Cys2056 each contribute to the Zn(2+) site. An FKBP8-binding region spans residues 2124-2212; it reads EFFSWVDGVQ…ASSSASQLSA (89 aa). The tract at residues 2124 to 2336 is transcriptional activation; sequence EFFSWVDGVQ…PVPPPRRRRA (213 aa). The segment at 2139 to 2143 is interaction with non-structural protein 4A; it reads PTPKA. An interaction with host SKP2 region spans residues 2193–2464; sequence RLARGSPPSA…ALITPCSPEE (272 aa). 6 positions are modified to phosphoserine; by host: Ser2198, Ser2201, Ser2205, Ser2208, Ser2211, and Ser2214. An ISDR region spans residues 2214-2253; sequence SLRATCTTHAKCPDIDMVDANLFCWCTMGGNMTRIESESK. The segment at 2214 to 2279 is interaction with EIF2AK2/PKR; sequence SLRATCTTHA…REPSIPSEYL (66 aa). Positions 2253–2310 are NS4B-binding; that stretch reads KVLMVDSFDPVVDKEDEREPSIPSEYLLPKSRFPPALPPWARPDYNPPLLETWKRPDY. The interval 2303–2381 is V3; sequence ETWKRPDYQP…GTTGETSKSP (79 aa). An SH3-binding motif is present at residues 2326–2329; the sequence is TPVP. The Nuclear localization signal motif lies at 2331 to 2339; it reads PRRRRAVVL. Residue Lys2354 forms a Glycyl lysine isopeptide (Lys-Gly) (interchain with G-Cter in ubiquitin) linkage. The tract at residues 2354 to 2434 is disordered; that stretch reads KSFGCPPPSG…APGSDSGSWS (81 aa). Acidic residues predominate over residues 2402-2411; sequence EPGDPDLEPE. Phosphoserine; by host is present on residues Ser2475 and Ser2488. In terms of domain architecture, RdRp catalytic spans 2660–2778; sequence PMGFSYDTRC…ISESQGVEED (119 aa). Mg(2+) contacts are provided by Asp2666, Asp2764, and Asp2765. A helical transmembrane segment spans residues 3017-3037; it reads LLLLGLLLLCVGVGIFLLPAR.

The protein belongs to the hepacivirus polyprotein family. Homooligomer. Interacts with E1 (via C-terminus). Interacts with the non-structural protein 5A. Interacts (via N-terminus) with host STAT1 (via SH2 domain); this interaction results in decreased STAT1 phosphorylation and ubiquitin-mediated proteasome-dependent STAT1 degradation, leading to decreased IFN-stimulated gene transcription. Interacts with host STAT3; this interaction constitutively activates STAT3. Interacts with host LTBR receptor. Interacts with host TNFRSF1A receptor and possibly induces apoptosis. Interacts with host HNRPK. Interacts with host YWHAE. Interacts with host UBE3A/E6AP. Interacts with host DDX3X. Interacts with host APOA2. Interacts with host RXRA protein. Interacts with host SP110 isoform 3/Sp110b; this interaction sequesters the transcriptional corepressor SP110 away from the nucleus. Interacts with host CREB3 nuclear transcription protein; this interaction triggers cell transformation. Interacts with host ACY3. Interacts with host C1QR1. Interacts with host RBM24; this interaction, which enhances the interaction of the mature core protein with 5'-UTR, may inhibit viral translation and favor replication. Interacts with host EIF2AK2/PKR; this interaction induces the autophosphorylation of EIF2AK2. Part of the viral assembly initiation complex composed of NS2, E1, E2, NS3, NS4A, NS5A and the mature core protein. As to quaternary structure, forms a heterodimer with envelope glycoprotein E2. Interacts with mature core protein. Interacts with protease NS2. The heterodimer E1/E2 interacts with host CLDN1; this interaction plays a role in viral entry into host cell. Interacts with host SPSB2 (via C-terminus). Part of the viral assembly initiation complex composed of NS2, E1, E2, NS3, NS4A, NS5A and the mature core protein. Interacts with host NEURL3; this interaction prevents E1 binding to glycoprotein E2. In terms of assembly, forms a heterodimer with envelope glycoprotein E1. Interacts with host CD81 and SCARB1 receptors; these interactions play a role in viral entry into host cell. Interacts with host EIF2AK2/PKR; this interaction inhibits EIF2AK2 and probably allows the virus to evade the innate immune response. Interacts with host CD209/DC-SIGN and CLEC4M/DC-SIGNR. Interact with host SPCS1; this interaction is essential for viral particle assembly. Interacts with protease NS2. The heterodimer E1/E2 interacts with host CLDN1; this interaction plays a role in viral entry into host cell. Part of the viral assembly initiation complex composed of NS2, E1, E2, NS3, NS4A, NS5A and the mature core protein. Interacts with host SLC3A2/4F2hc; the interaction may facilitate viral entry into host cell. Interacts with human PLSCR1. Homohexamer. Homoheptamer. Interacts with protease NS2. As to quaternary structure, homodimer. Interacts with host SPCS1; this interaction is essential for viral particle assembly. Interacts with envelope glycoprotein E1. Interacts with envelope glycoprotein E2. Interacts with viroporin p7. Interacts with serine protease/helicase NS3. Part of the replication complex composed of NS2, NS3, NS4A, NS4B, NS5A and the RNA-directed RNA polymerase embedded in an ER-derived membranous web. Part of the viral assembly initiation complex composed of NS2, E1, E2, NS3, NS4A, NS5A and the mature core protein. In terms of assembly, interacts with protease NS2. Interacts with non-structural protein 4A; this interaction stabilizes the folding of NS3 serine protease. NS3-NS4A interaction is essential for NS3 activation and allows membrane anchorage of the latter. NS3/NS4A complex also prevents phosphorylation of host IRF3, thus preventing the establishment of dsRNA induced antiviral state. Interacts with host MAVS; this interaction leads to the cleavage and inhibition of host MAVS. Interacts with host TICAM1; this interaction leads to the cleavage and inhibition of host TICAM1. Interacts with host TANK-binding kinase/TBK1; this interaction results in the inhibition of the association between TBK1 and IRF3, which leads to the inhibition of IRF3 activation. Interacts with host RBM24. Part of the replication complex composed of NS2, NS3, NS4A, NS4B, NS5A and the RNA-directed RNA polymerase embedded in an ER-derived membranous web. Part of the viral assembly initiation complex composed of NS2, E1, E2, NS3, NS4A, NS5A and the mature core protein. Interacts with NS3 serine protease; this interaction stabilizes the folding of NS3 serine protease. NS3-NS4A interaction is essential for NS3 activation and allows membrane anchorage of the latter. Interacts with non-structural protein 5A (via N-terminus). Part of the replication complex composed of NS2, NS3, NS4A, NS4B, NS5A and the RNA-directed RNA polymerase embedded in an ER-derived membranous web. Part of the viral assembly initiation complex composed of NS2, E1, E2, NS3, NS4A, NS5A and the mature core protein. As to quaternary structure, homomultimer. Interacts with non-structural protein NS5A. Interacts with host PLA2G4C; this interaction likely initiates the recruitment of replication complexes to lipid droplets. Interacts with host STING; this interaction disrupts the interaction between STING and TBK1 thereby suppressing the interferon signaling. Part of the replication complex composed of NS2, NS3, NS4A, NS4B, NS5A and the RNA-directed RNA polymerase embedded in an ER-derived membranous web. In terms of assembly, monomer. Homodimer; dimerization is required for RNA-binding. Interacts with the mature core protein. Interacts (via N-terminus) with non-structural protein 4A. Interacts with non-structural protein 4B. Interacts (via region D2) with RNA-directed RNA polymerase. Part of the viral assembly initiation complex composed of NS2, E1, E2, NS3, NS4A, NS5A and the mature core protein. Part of the replication complex composed of NS2, NS3, NS4A, NS4B, NS5A and the RNA-directed RNA polymerase embedded in an ER-derived membranous web. Interacts with host GRB2. Interacts with host BIN1. Interacts with host PIK3R1. Interacts with host SRCAP. Interacts with host FKBP8. Interacts (via C-terminus) with host VAPB (via MSP domain). Interacts with host EIF2AK2/PKR; this interaction leads to disruption of EIF2AK2 dimerization by NS5A and probably allows the virus to evade the innate immune response. Interacts (via N-terminus) with host PACSIN2 (via N-terminus); this interaction attenuates protein kinase C alpha-mediated phosphorylation of PACSIN2 by disrupting the interaction between PACSIN2 and PRKCA. Interacts (via N-terminus) with host SRC kinase (via SH2 domain). Interacts with most Src-family kinases. Interacts with host IFI27 and SKP2; promotes the ubiquitin-mediated proteasomal degradation of NS5A. Interacts with host GPS2. Interacts with host TNFRSF21; this interaction allows the modulation by the virus of JNK, p38 MAPK, STAT3, and Akt signaling pathways in a DR6-dependent manner. Interacts (via N-terminus) with host CIDEB (via N-terminus); this interaction seems to regulate the association of HCV particles with APOE. Interacts with host CHKA/Choline Kinase-alpha; CHKA bridges host PI4KA and NS5A and potentiates NS5A-stimulated PI4KA activity, which then facilitates the targeting of the ternary complex to the ER for viral replication. Interacts with host SPSB2 (via C-terminus); this interaction targets NS5A for ubiquitination and degradation. Interacts with host RAB18; this interaction may promote the association of NS5A and other replicase components with lipid droplets. Interacts (via region D2) with host PPIA/CYPA; the interaction stimulates RNA-binding ability of NS5A and is dependent on the peptidyl-prolyl cis-trans isomerase activity of PPIA/CYPA. Interacts with host TRIM14; this interaction induces the degradation of NS5A. Homooligomer. Interacts with non-structural protein 5A. Interacts with host VAPB. Interacts with host PRK2/PKN2. Interacts with host HNRNPA1 and SEPT6; these interactions facilitate viral replication. Part of the replication complex composed of NS2, NS3, NS4A, NS4B, NS5A and the RNA-directed RNA polymerase. Zn(2+) is required as a cofactor. The cofactor is Mg(2+). In terms of processing, specific enzymatic cleavages in vivo yield mature proteins. The structural proteins, core, E1, E2 and p7 are produced by proteolytic processing by host signal peptidases. The core protein precursor is synthesized as a 23 kDa, which is retained in the ER membrane through the hydrophobic signal peptide. Cleavage by the signal peptidase releases the 21 kDa mature core protein. The cleavage of the core protein precursor occurs between aminoacids 176 and 188 but the exact cleavage site is not known. Some degraded forms of the core protein appear as well during the course of infection. The other proteins (p7, NS2, NS3, NS4A, NS4B, NS5A and NS5B) are cleaved by the viral proteases. Autoprocessing between NS2 and NS3 is mediated by the NS2 cysteine protease catalytic domain and regulated by the NS3 N-terminal domain. Post-translationally, phosphorylated by host PKC and PKA. Ubiquitinated; mediated by UBE3A and leading to core protein subsequent proteasomal degradation. In terms of processing, highly N-glycosylated. Post-translationally, palmitoylation is required for NS2/3 autoprocessing and E2 recruitment to membranes. Palmitoylated. This modification may play a role in its polymerization or in protein-protein interactions. In terms of processing, phosphorylated on serines in a basal form termed p56. p58 is a hyperphosphorylated form of p56. p56 and p58 coexist in the cell in roughly equivalent amounts. Hyperphosphorylation is dependent on the presence of NS4A. Host CSNK1A1/CKI-alpha or RPS6KB1 kinases may be responsible for NS5A phosphorylation. Post-translationally, tyrosine phosphorylation is essential for the interaction with host SRC. The N-terminus is phosphorylated by host PRK2/PKN2.

It is found in the host endoplasmic reticulum membrane. It localises to the host mitochondrion membrane. Its subcellular location is the virion. The protein resides in the host cytoplasm. The protein localises to the host nucleus. It is found in the host lipid droplet. It localises to the virion membrane. Its subcellular location is the host mitochondrion. The protein resides in the host cell membrane. The protein localises to the host perinuclear region. The catalysed reaction is Hydrolysis of four peptide bonds in the viral precursor polyprotein, commonly with Asp or Glu in the P6 position, Cys or Thr in P1 and Ser or Ala in P1'.. The enzyme catalyses a ribonucleoside 5'-triphosphate + H2O = a ribonucleoside 5'-diphosphate + phosphate + H(+). It catalyses the reaction ATP + H2O = ADP + phosphate + H(+). It carries out the reaction RNA(n) + a ribonucleoside 5'-triphosphate = RNA(n+1) + diphosphate. Inhibited by the antiviral drug hexamethylene amiloride. Inhibition by amantadine appears to be genotype-dependent. Also inhibited by long-alkyl-chain iminosugar derivatives. With respect to regulation, activity is up-regulated by PRK2/PKN2-mediated phosphorylation. Its function is as follows. Packages viral RNA to form a viral nucleocapsid, and promotes virion budding. Participates in the viral particle production as a result of its interaction with the non-structural protein 5A. Binds RNA and may function as a RNA chaperone to induce the RNA structural rearrangements taking place during virus replication. Modulates viral translation initiation by interacting with viral IRES and 40S ribosomal subunit. Affects various cell signaling pathways, host immunity and lipid metabolism. Prevents the establishment of cellular antiviral state by blocking the interferon-alpha/beta (IFN-alpha/beta) and IFN-gamma signaling pathways and by blocking the formation of phosphorylated STAT1 and promoting ubiquitin-mediated proteasome-dependent degradation of STAT1. Activates STAT3 leading to cellular transformation. Regulates the activity of cellular genes, including c-myc and c-fos. May repress the promoter of p53, and sequester CREB3 and SP110 isoform 3/Sp110b in the cytoplasm. Represses cell cycle negative regulating factor CDKN1A, thereby interrupting an important check point of normal cell cycle regulation. Targets transcription factors involved in the regulation of inflammatory responses and in the immune response: suppresses TNF-induced NF-kappa-B activation, and activates AP-1. Binds to dendritic cells (DCs) via C1QR1, resulting in down-regulation of T-lymphocytes proliferation. Alters lipid metabolism by interacting with hepatocellular proteins involved in lipid accumulation and storage. Induces up-regulation of FAS promoter activity, and thereby contributes to the increased triglyceride accumulation in hepatocytes (steatosis). Forms a heterodimer with envelope glycoprotein E2, which mediates virus attachment to the host cell, virion internalization through clathrin-dependent endocytosis and fusion with host membrane. Fusion with the host cell is most likely mediated by both E1 and E2, through conformational rearrangements of the heterodimer required for fusion rather than a classical class II fusion mechanism. E1/E2 heterodimer binds host apolipoproteins such as APOB and ApoE thereby forming a lipo-viro-particle (LVP). APOE associated to the LVP allows the initial virus attachment to cell surface receptors such as the heparan sulfate proteoglycans (HSPGs), syndecan-1 (SDC1), syndecan-1 (SDC2), the low-density lipoprotein receptor (LDLR) and scavenger receptor class B type I (SCARB1). The cholesterol transfer activity of SCARB1 allows E2 exposure and binding of E2 to SCARB1 and the tetraspanin CD81. E1/E2 heterodimer binding on CD81 activates the epithelial growth factor receptor (EGFR) signaling pathway. Diffusion of the complex E1-E2-EGFR-SCARB1-CD81 to the cell lateral membrane allows further interaction with Claudin 1 (CLDN1) and occludin (OCLN) to finally trigger HCV entry. In terms of biological role, forms a heterodimer with envelope glycoprotein E1, which mediates virus attachment to the host cell, virion internalization through clathrin-dependent endocytosis and fusion with host membrane. Fusion with the host cell is most likely mediated by both E1 and E2, through conformational rearrangements of the heterodimer required for fusion rather than a classical class II fusion mechanism. The interaction between envelope glycoprotein E2 and host apolipoprotein E/APOE allows the proper assembly, maturation and infectivity of the viral particles. This interaction is probably promoted via the up-regulation of cellular autophagy by the virus. E1/E2 heterodimer binds host apolipoproteins such as APOB and APOE thereby forming a lipo-viro-particle (LVP). APOE associated to the LVP allows the initial virus attachment to cell surface receptors such as the heparan sulfate proteoglycans (HSPGs), syndecan-1 (SDC1), syndecan-1 (SDC2), the low-density lipoprotein receptor (LDLR) and scavenger receptor class B type I (SCARB1). The cholesterol transfer activity of SCARB1 allows E2 exposure and binding of E2 to SCARB1 and the tetraspanin CD81. E1/E2 heterodimer binding on CD81 activates the epithelial growth factor receptor (EGFR) signaling pathway. Diffusion of the complex E1-E2-EGFR-SCARB1-CD81 to the cell lateral membrane allows further interaction with Claudin 1 (CLDN1) and occludin (OCLN) to finally trigger HCV entry. Inhibits host EIF2AK2/PKR activation, preventing the establishment of an antiviral state. Viral ligand for CD209/DC-SIGN and CLEC4M/DC-SIGNR, which are respectively found on dendritic cells (DCs), and on liver sinusoidal endothelial cells and macrophage-like cells of lymph node sinuses. These interactions allow the capture of circulating HCV particles by these cells and subsequent facilitated transmission to permissive cells such as hepatocytes and lymphocyte subpopulations. The interaction between E2 and host amino acid transporter complex formed by SLC3A2 and SLC7A5/LAT1 may facilitate viral entry into host cell. Functionally, ion channel protein that acts as a viroporin and plays an essential role in the assembly, envelopment and secretion of viral particles. Regulates the host cell secretory pathway, which induces the intracellular retention of viral glycoproteins and favors assembly of viral particles. Creates a pore in acidic organelles and releases Ca(2+) and H(+) in the cytoplasm of infected cells, leading to a productive viral infection. High levels of cytoplasmic Ca(2+) may trigger membrane trafficking and transport of viral ER-associated proteins to viroplasms, sites of viral genome replication. This ionic imbalance induces the assembly of the inflammasome complex, which triggers the maturation of pro-IL-1beta into IL-1beta through the action of caspase-1. Targets also host mitochondria and induces mitochondrial depolarization. In addition of its role as a viroporin, acts as a lipid raft adhesion factor. Its function is as follows. Cysteine protease required for the proteolytic auto-cleavage between the non-structural proteins NS2 and NS3. The N-terminus of NS3 is required for the function of NS2 protease (active region NS2-3). Promotes the initiation of viral particle assembly by mediating the interaction between structural and non-structural proteins. Displays three enzymatic activities: serine protease with a chymotrypsin-like fold, NTPase and RNA helicase. NS3 serine protease, in association with NS4A, is responsible for the cleavages of NS3-NS4A, NS4A-NS4B, NS4B-NS5A and NS5A-NS5B. The NS3/NS4A complex prevents phosphorylation of host IRF3, thus preventing the establishment of dsRNA induced antiviral state. The NS3/NS4A complex induces host amino acid transporter component SLC3A2, thus contributing to HCV propagation. NS3 RNA helicase binds to RNA and unwinds both dsDNA and dsRNA in the 3' to 5' direction, and likely resolves RNA complicated stable secondary structures in the template strand. Binds a single ATP and catalyzes the unzipping of a single base pair of dsRNA. Inhibits host antiviral proteins TBK1 and IRF3 thereby preventing the establishment of an antiviral state. Cleaves host MAVS/CARDIF thereby preventing the establishment of an antiviral state. Cleaves host TICAM1/TRIF, thereby disrupting TLR3 signaling and preventing the establishment of an antiviral state. In terms of biological role, induces a specific membrane alteration that serves as a scaffold for the virus replication complex. This membrane alteration gives rise to the so-called ER-derived membranous web that contains the replication complex. NS4B self-interaction contributes to its function in membranous web formation. Promotes host TRIF protein degradation in a CASP8-dependent manner thereby inhibiting host TLR3-mediated interferon signaling. Disrupts the interaction between STING and TBK1 contributing to the inhibition of interferon signaling. Functionally, phosphorylated protein that is indispensable for viral replication and assembly. Both hypo- and hyperphosphorylated states are required for the viral life cycle. The hyperphosphorylated form of NS5A is an inhibitor of viral replication. Involved in RNA-binding and especially in binding to the viral genome. Zinc is essential for RNA-binding. Participates in the viral particle production as a result of its interaction with the mature viral core protein. Its interaction with host VAPB may target the viral replication complex to vesicles. Down-regulates viral IRES translation initiation. Mediates interferon resistance, presumably by interacting with and inhibiting host EIF2AK2/PKR. Prevents BIN1-induced apoptosis. Acts as a transcriptional activator of some host genes important for viral replication when localized in the nucleus. Via the interaction with host PACSIN2, modulates lipid droplet formation in order to promote virion assembly. Modulates TNFRSF21/DR6 signaling pathway for viral propagation. Its function is as follows. RNA-dependent RNA polymerase that performs primer-template recognition and RNA synthesis during viral replication. Initiates RNA transcription/replication at a flavin adenine dinucleotide (FAD), resulting in a 5'- FAD cap on viral RNAs. In this way, recognition of viral 5' RNA by host pattern recognition receptors can be bypassed, thereby evading activation of antiviral pathways. The protein is Genome polyprotein of Hepatitis C virus genotype 2c (isolate BEBE1) (HCV).